The primary structure comprises 151 residues: Protein ECM12 (151 aa).

Residue Asn-2 is glycosylated (N-linked (GlcNAc...) asparagine). 2 helical membrane-spanning segments follow: residues 17-37 (LLVF…IFFF) and 51-71 (AFLA…VGFF). N-linked (GlcNAc...) asparagine glycosylation is found at Asn-132 and Asn-137.

The protein localises to the membrane. Its function is as follows. May be involved in cell wall organization and biogenesis. This Saccharomyces cerevisiae (strain ATCC 204508 / S288c) (Baker's yeast) protein is Protein ECM12 (ECM12).